The primary structure comprises 109 residues: MEVKAIHRGARISAQKTRLVADQIRGLPIERALNVLTFSPKKAAGIVKKVVESAIANAEHNEGADIDELKVKSIFVDKATSLKRFTARAKGRGNRIEKQTCHITVTLGN.

Belongs to the universal ribosomal protein uL22 family. Part of the 50S ribosomal subunit.

Functionally, this protein binds specifically to 23S rRNA; its binding is stimulated by other ribosomal proteins, e.g. L4, L17, and L20. It is important during the early stages of 50S assembly. It makes multiple contacts with different domains of the 23S rRNA in the assembled 50S subunit and ribosome. In terms of biological role, the globular domain of the protein is located near the polypeptide exit tunnel on the outside of the subunit, while an extended beta-hairpin is found that lines the wall of the exit tunnel in the center of the 70S ribosome. This Cupriavidus necator (strain ATCC 17699 / DSM 428 / KCTC 22496 / NCIMB 10442 / H16 / Stanier 337) (Ralstonia eutropha) protein is Large ribosomal subunit protein uL22.